We begin with the raw amino-acid sequence, 364 residues long: 1-aminocyclopropane-1-carboxylate oxidase homolog 11 (364 aa).

The 100-residue stretch at K213–S312 folds into the Fe2OG dioxygenase domain. Fe cation contacts are provided by H237, D239, and H293. 2-oxoglutarate is bound at residue R303.

This sequence belongs to the iron/ascorbate-dependent oxidoreductase family. Fe(2+) serves as cofactor.

The protein is 1-aminocyclopropane-1-carboxylate oxidase homolog 11 of Arabidopsis thaliana (Mouse-ear cress).